The sequence spans 151 residues: Cytochrome c-type biogenesis protein CcmE (151 aa).

Over 1 to 8 (MNPLRRKR) the chain is Cytoplasmic. A helical; Signal-anchor for type II membrane protein transmembrane segment spans residues 9 to 29 (LLIILAILVGVGVAVGLALSA). Residues 30–151 (LQQNINLFYT…QSAPTPAKEG (122 aa)) lie on the Periplasmic side of the membrane. The heme site is built by histidine 124 and tyrosine 128.

The protein belongs to the CcmE/CycJ family.

Its subcellular location is the cell inner membrane. Its function is as follows. Heme chaperone required for the biogenesis of c-type cytochromes. Transiently binds heme delivered by CcmC and transfers the heme to apo-cytochromes in a process facilitated by CcmF and CcmH. This is Cytochrome c-type biogenesis protein CcmE from Pseudomonas fluorescens biotype C.